Consider the following 103-residue polypeptide: MQPNDITFFQRFQDDILAGRKTITIRDESESHFKTGDVLRVGRFEDDGYFCTIEVTATSTVTLDTLTEKHAEQENMTLTELKKVIADIYPGQTQFYVIEFKCL.

Residues 6–101 enclose the ASCH domain; it reads ITFFQRFQDD…QTQFYVIEFK (96 aa). Residue lysine 21 is the Proton acceptor of the active site. Threonine 24 functions as the Nucleophile in the catalytic mechanism. Glutamate 74 functions as the Proton donor in the catalytic mechanism.

It belongs to the N(4)-acetylcytidine amidohydrolase family.

It catalyses the reaction N(4)-acetylcytidine + H2O = cytidine + acetate + H(+). The enzyme catalyses N(4)-acetyl-2'-deoxycytidine + H2O = 2'-deoxycytidine + acetate + H(+). It carries out the reaction N(4)-acetylcytosine + H2O = cytosine + acetate + H(+). Catalyzes the hydrolysis of N(4)-acetylcytidine (ac4C). In Escherichia coli (strain K12 / MC4100 / BW2952), this protein is N(4)-acetylcytidine amidohydrolase (yqfB).